Here is a 444-residue protein sequence, read N- to C-terminus: Adenylosuccinate synthetase (444 aa).

GTP-binding positions include 13–19 and 41–43; these read GDEGKGK and GHT. Asp14 serves as the catalytic Proton acceptor. Positions 14 and 41 each coordinate Mg(2+). IMP contacts are provided by residues 14-17, 39-42, Thr129, Arg143, Gln224, Thr239, and Arg303; these read DEGK and NAGH. His42 functions as the Proton donor in the catalytic mechanism. Position 299 to 305 (299 to 305) interacts with substrate; sequence TTTGRRR. Residues Arg305, 331–333, and 413–415 contribute to the GTP site; these read KLD and SLG.

This sequence belongs to the adenylosuccinate synthetase family. Homodimer. Requires Mg(2+) as cofactor.

It localises to the cytoplasm. It catalyses the reaction IMP + L-aspartate + GTP = N(6)-(1,2-dicarboxyethyl)-AMP + GDP + phosphate + 2 H(+). It participates in purine metabolism; AMP biosynthesis via de novo pathway; AMP from IMP: step 1/2. In terms of biological role, plays an important role in the de novo pathway of purine nucleotide biosynthesis. Catalyzes the first committed step in the biosynthesis of AMP from IMP. In Synechocystis sp. (strain ATCC 27184 / PCC 6803 / Kazusa), this protein is Adenylosuccinate synthetase.